A 123-amino-acid polypeptide reads, in one-letter code: Small ribosomal subunit protein uS12 (123 aa).

This sequence belongs to the universal ribosomal protein uS12 family. Part of the 30S ribosomal subunit. Contacts proteins S8 and S17. May interact with IF1 in the 30S initiation complex.

Functionally, with S4 and S5 plays an important role in translational accuracy. In terms of biological role, interacts with and stabilizes bases of the 16S rRNA that are involved in tRNA selection in the A site and with the mRNA backbone. Located at the interface of the 30S and 50S subunits, it traverses the body of the 30S subunit contacting proteins on the other side and probably holding the rRNA structure together. The combined cluster of proteins S8, S12 and S17 appears to hold together the shoulder and platform of the 30S subunit. This Corynebacterium diphtheriae (strain ATCC 700971 / NCTC 13129 / Biotype gravis) protein is Small ribosomal subunit protein uS12.